Here is a 399-residue protein sequence, read N- to C-terminus: Nicotinate phosphoribosyltransferase (399 aa).

Histidine 224 carries the post-translational modification Phosphohistidine; by autocatalysis.

This sequence belongs to the NAPRTase family. Transiently phosphorylated on a His residue during the reaction cycle. Phosphorylation strongly increases the affinity for substrates and increases the rate of nicotinate D-ribonucleotide production. Dephosphorylation regenerates the low-affinity form of the enzyme, leading to product release.

The enzyme catalyses nicotinate + 5-phospho-alpha-D-ribose 1-diphosphate + ATP + H2O = nicotinate beta-D-ribonucleotide + ADP + phosphate + diphosphate. Its pathway is cofactor biosynthesis; NAD(+) biosynthesis; nicotinate D-ribonucleotide from nicotinate: step 1/1. Its function is as follows. Catalyzes the synthesis of beta-nicotinate D-ribonucleotide from nicotinate and 5-phospho-D-ribose 1-phosphate at the expense of ATP. The protein is Nicotinate phosphoribosyltransferase of Ectopseudomonas mendocina (strain ymp) (Pseudomonas mendocina).